We begin with the raw amino-acid sequence, 787 residues long: Ribonucleoside-diphosphate reductase large subunit (787 aa).

Residues threonine 209, serine 224 to cysteine 225, glycine 255, asparagine 436 to glutamate 440, and proline 618 to serine 622 contribute to the substrate site. Cysteine 225 and cysteine 453 form a disulfide bridge. Asparagine 436 (proton acceptor) is an active-site residue. Cysteine 438 acts as the Cysteine radical intermediate in catalysis. Glutamate 440 acts as the Proton acceptor in catalysis.

Belongs to the ribonucleoside diphosphate reductase large chain family. As to quaternary structure, heterotetramer composed of a homodimer of the large subunit (R1) and a homodimer of the small subunit (R2). Larger multisubunit protein complex are also active, composed of (R1)n(R2)n.

It carries out the reaction a 2'-deoxyribonucleoside 5'-diphosphate + [thioredoxin]-disulfide + H2O = a ribonucleoside 5'-diphosphate + [thioredoxin]-dithiol. Ribonucleoside-diphosphate reductase holoenzyme provides the precursors necessary for viral DNA synthesis. Allows virus growth in non-dividing cells, as well as reactivation from latency in infected hosts. Catalyzes the biosynthesis of deoxyribonucleotides from the corresponding ribonucleotides. This is Ribonucleoside-diphosphate reductase large subunit from Bos taurus (Bovine).